The following is a 214-amino-acid chain: Ribosomal RNA large subunit methyltransferase E (214 aa).

Positions 60, 62, 86, 102, and 127 each coordinate S-adenosyl-L-methionine. K167 serves as the catalytic Proton acceptor.

This sequence belongs to the class I-like SAM-binding methyltransferase superfamily. RNA methyltransferase RlmE family.

The protein localises to the cytoplasm. It carries out the reaction uridine(2552) in 23S rRNA + S-adenosyl-L-methionine = 2'-O-methyluridine(2552) in 23S rRNA + S-adenosyl-L-homocysteine + H(+). Its function is as follows. Specifically methylates the uridine in position 2552 of 23S rRNA at the 2'-O position of the ribose in the fully assembled 50S ribosomal subunit. This is Ribosomal RNA large subunit methyltransferase E from Herminiimonas arsenicoxydans.